The sequence spans 450 residues: Serine/threonine-protein kinase SSN3 (450 aa).

Residues 40–393 (YRIIGFISSG…AAQALQSPFF (354 aa)) form the Protein kinase domain. ATP is bound by residues 46–54 (ISSGTYGRV) and lysine 71. Aspartate 173 (proton acceptor) is an active-site residue. 2 disordered regions span residues 307–341 (ASSH…NLEK) and 418–450 (QDDN…RQKE). A compositionally biased stretch (basic residues) spans 310-326 (HHNHHSHHHPHHHHGHY).

This sequence belongs to the protein kinase superfamily. CMGC Ser/Thr protein kinase family. CDC2/CDKX subfamily. In terms of assembly, component of the SRB8-11 complex, a regulatory module of the Mediator complex. Interacts with SSN8/FCC1. Mg(2+) serves as cofactor.

It is found in the nucleus. It carries out the reaction L-seryl-[protein] + ATP = O-phospho-L-seryl-[protein] + ADP + H(+). The catalysed reaction is L-threonyl-[protein] + ATP = O-phospho-L-threonyl-[protein] + ADP + H(+). The enzyme catalyses [DNA-directed RNA polymerase] + ATP = phospho-[DNA-directed RNA polymerase] + ADP + H(+). Its function is as follows. Component of the SRB8-11 complex. The SRB8-11 complex is a regulatory module of the Mediator complex which is itself involved in regulation of basal and activated RNA polymerase II-dependent transcription. The SRB8-11 complex may be involved in the transcriptional repression of a subset of genes regulated by Mediator. It may inhibit the association of the Mediator complex with RNA polymerase II to form the holoenzyme complex. The SRB8-11 complex phosphorylates the C-terminal domain (CTD) of the largest subunit of RNA polymerase II. Required for normal growth and secondary metabolism. In Gibberella moniliformis (Maize ear and stalk rot fungus), this protein is Serine/threonine-protein kinase SSN3 (SSN3).